A 199-amino-acid chain; its full sequence is Small ribosomal subunit protein uS4 (199 aa).

The region spanning 106 to 170 (RRLQTIVFRK…SPVANELHPI (65 aa)) is the S4 RNA-binding domain. A disordered region spans residues 177-199 (PAQRSAEMKEGQGEASEEGETDE).

This sequence belongs to the universal ribosomal protein uS4 family. As to quaternary structure, part of the 30S ribosomal subunit. Contacts protein S5. The interaction surface between S4 and S5 is involved in control of translational fidelity.

Its function is as follows. One of the primary rRNA binding proteins, it binds directly to 16S rRNA where it nucleates assembly of the body of the 30S subunit. With S5 and S12 plays an important role in translational accuracy. The sequence is that of Small ribosomal subunit protein uS4 from Thermoplasma acidophilum (strain ATCC 25905 / DSM 1728 / JCM 9062 / NBRC 15155 / AMRC-C165).